The chain runs to 298 residues: Protein pxr1 (298 aa).

The span at 1–11 (MGLAAPRKRTK) shows a compositional bias: basic residues. Residues 1–23 (MGLAAPRKRTKISHDPNNTNWAR) are disordered. The G-patch domain occupies 25–79 (TSGFGHKILSSQGWTPGSFLGARDAAHADMFTAASAGHIRVVVKDDTLGLGARAG). Positions 145 to 274 (LPERESVQQS…RPLGRQIVRG (130 aa)) are disordered. Positions 151–164 (VQQSRAAVETSDSN) are enriched in polar residues. Positions 199–222 (REKKEKKDKKEKKEKKDKKDKKRK) are enriched in basic residues. The span at 247-256 (GLESDSTSVS) shows a compositional bias: polar residues.

It belongs to the PINX1 family.

Its subcellular location is the nucleus. It localises to the nucleolus. Functionally, involved in rRNA-processing at A0, A1 and A2 sites and negatively regulates telomerase. The sequence is that of Protein pxr1 (pxr1) from Aspergillus terreus (strain NIH 2624 / FGSC A1156).